The chain runs to 862 residues: DNA mismatch repair protein MutS (862 aa).

608 to 615 (GPNMAGKS) contacts ATP.

The protein belongs to the DNA mismatch repair MutS family.

In terms of biological role, this protein is involved in the repair of mismatches in DNA. It is possible that it carries out the mismatch recognition step. This protein has a weak ATPase activity. The chain is DNA mismatch repair protein MutS from Bacteroides thetaiotaomicron (strain ATCC 29148 / DSM 2079 / JCM 5827 / CCUG 10774 / NCTC 10582 / VPI-5482 / E50).